The chain runs to 905 residues: Alanine--tRNA ligase (905 aa).

Residues His569, His573, Cys693, and His697 each coordinate Zn(2+).

Belongs to the class-II aminoacyl-tRNA synthetase family. It depends on Zn(2+) as a cofactor.

The protein resides in the cytoplasm. The catalysed reaction is tRNA(Ala) + L-alanine + ATP = L-alanyl-tRNA(Ala) + AMP + diphosphate. In terms of biological role, catalyzes the attachment of alanine to tRNA(Ala) in a two-step reaction: alanine is first activated by ATP to form Ala-AMP and then transferred to the acceptor end of tRNA(Ala). Also edits incorrectly charged Ser-tRNA(Ala) and Gly-tRNA(Ala) via its editing domain. This chain is Alanine--tRNA ligase, found in Roseiflexus castenholzii (strain DSM 13941 / HLO8).